Here is a 215-residue protein sequence, read N- to C-terminus: N-(5'-phosphoribosyl)anthranilate isomerase (215 aa).

It belongs to the TrpF family.

It catalyses the reaction N-(5-phospho-beta-D-ribosyl)anthranilate = 1-(2-carboxyphenylamino)-1-deoxy-D-ribulose 5-phosphate. It functions in the pathway amino-acid biosynthesis; L-tryptophan biosynthesis; L-tryptophan from chorismate: step 3/5. The protein is N-(5'-phosphoribosyl)anthranilate isomerase of Rhizobium meliloti (strain 1021) (Ensifer meliloti).